A 78-amino-acid polypeptide reads, in one-letter code: Putative membrane protein insertion efficiency factor (78 aa).

This sequence belongs to the UPF0161 family.

The protein resides in the cell inner membrane. Functionally, could be involved in insertion of integral membrane proteins into the membrane. The chain is Putative membrane protein insertion efficiency factor from Thiobacillus denitrificans (strain ATCC 25259 / T1).